The primary structure comprises 474 residues: MTKKLHIKTWGCQMNEYDSSKMADLLASTHGYQLTTIPEEADLLLLNTCSIREKAQEKVFSLLGQWKLLKEKNPQLIIGVGGCVASQEGEQLRQRAPCVDVIFGPQTLHRLPEMINHVQGTNSPVVDISFPEIEKFDRLPEPRAEGPTAFVSIMEGCNKYCTFCVVPYTRGEEVSRPSDDILFEIAQLAAQGVREVNLLGQNVNAYRGATYDGDICSFAELLRLVAAIDGIDRIRFTTSHPIEFTDDIIDVYRDTPELVSFLHLPVQSGSDRILTMMKRAHTALEYKAIIRKLRQARPDIQISSDFIVGFPGETQQDFEQTMKLVADIHFDTSYSFIYSPRPGTPAADLPDNVSEEEKKQRLHILQQRISQQAMEISRKMVGTVQRVLVEGTSRKNVMELAGRTENNRVVNFEGSPDMIGKFVDVEIVNVYASSLRGILLRTEDQMDLRTHESPQSVIARTRKENEIGVGIYQP.

Residues 3 to 120 enclose the MTTase N-terminal domain; sequence KKLHIKTWGC…LPEMINHVQG (118 aa). Residues cysteine 12, cysteine 49, cysteine 83, cysteine 157, cysteine 161, and cysteine 164 each contribute to the [4Fe-4S] cluster site. The 233-residue stretch at 143-375 folds into the Radical SAM core domain; it reads RAEGPTAFVS…QQRISQQAME (233 aa). Residues 378–441 form the TRAM domain; the sequence is RKMVGTVQRV…ASSLRGILLR (64 aa).

This sequence belongs to the methylthiotransferase family. MiaB subfamily. In terms of assembly, monomer. Requires [4Fe-4S] cluster as cofactor.

It localises to the cytoplasm. The enzyme catalyses N(6)-dimethylallyladenosine(37) in tRNA + (sulfur carrier)-SH + AH2 + 2 S-adenosyl-L-methionine = 2-methylsulfanyl-N(6)-dimethylallyladenosine(37) in tRNA + (sulfur carrier)-H + 5'-deoxyadenosine + L-methionine + A + S-adenosyl-L-homocysteine + 2 H(+). Catalyzes the methylthiolation of N6-(dimethylallyl)adenosine (i(6)A), leading to the formation of 2-methylthio-N6-(dimethylallyl)adenosine (ms(2)i(6)A) at position 37 in tRNAs that read codons beginning with uridine. The chain is tRNA-2-methylthio-N(6)-dimethylallyladenosine synthase from Yersinia pseudotuberculosis serotype O:1b (strain IP 31758).